We begin with the raw amino-acid sequence, 145 residues long: Large ribosomal subunit protein uL15 (145 aa).

The disordered stretch occupies residues 20–54 (GRGMASGKGKTATRGHKGQNSRSGGGVRPGFEGGQ). Residues 42-52 (SGGGVRPGFEG) are compositionally biased toward gly residues.

Belongs to the universal ribosomal protein uL15 family. In terms of assembly, part of the 50S ribosomal subunit.

Binds to the 23S rRNA. This Mycoplasma mycoides subsp. mycoides SC (strain CCUG 32753 / NCTC 10114 / PG1) protein is Large ribosomal subunit protein uL15.